Here is a 333-residue protein sequence, read N- to C-terminus: Torsin-1A (333 aa).

A signal peptide spans 1-20 (MKLGRAALALLLLAPCVVRA). The interval 92 to 252 (KPKKPLTLSL…VSVFNNKNSG (161 aa)) is interaction with SNAPIN. 103 to 110 (GWTGTGKN) serves as a coordination point for ATP. Asparagine 144 and asparagine 159 each carry an N-linked (GlcNAc...) asparagine glycan. The tract at residues 252 to 333 (GFWHSSLIDR…FTKLDYYLDD (82 aa)) is interaction with KLC1. The interaction with SYNE3 stretch occupies residues 313–333 (KVFSDKGCKTVFTKLDYYLDD).

This sequence belongs to the ClpA/ClpB family. Torsin subfamily. In terms of assembly, homohexamer. Interacts with TOR1B; the interaction may be specific of neural tissues. Interacts (ATP-bound) with TOR1AIP1 and TOR1AIP2; the interactions induce ATPase activity. Interacts with KLHL14; preferentially when ATP-free. Interacts with KLC1 (via TPR repeats); the interaction associates TOR1A with the kinesin oligomeric complex. Interacts with COPS4; the interaction associates TOR1A with the CSN complex. Interacts with SNAPIN; the interaction is direct and associates SNAPIN with the CSN complex. Interacts with STON2. Interacts (ATP-bound) with SYNE3 (via KASH domain); the interaction is required for SYNE3 nuclear envelope localization. Interacts with VIM; the interaction associates TOR1A with the cytoskeleton. Interacts with PLEC. Interacts (ATP-bound) with SLC6A3; regulates SLC6A3 transport to the plasma membrane. In terms of processing, N-glycosylated. As to expression, widely expressed (at protein level).

The protein localises to the endoplasmic reticulum lumen. The protein resides in the nucleus membrane. Its subcellular location is the cell projection. It localises to the growth cone. It is found in the cytoplasmic vesicle membrane. The protein localises to the synapse. The protein resides in the synaptosome. Its subcellular location is the cytoplasm. It localises to the cytoskeleton. It is found in the cytoplasmic vesicle. The protein localises to the secretory vesicle. The protein resides in the synaptic vesicle. The enzyme catalyses ATP + H2O = ADP + phosphate + H(+). In terms of biological role, protein with chaperone functions important for the control of protein folding, processing, stability and localization as well as for the reduction of misfolded protein aggregates. Involved in the regulation of synaptic vesicle recycling, controls STON2 protein stability in collaboration with the COP9 signalosome complex (CSN). In the nucleus, may link the cytoskeleton with the nuclear envelope, this mechanism seems to be crucial for the control of nuclear polarity, cell movement and, specifically in neurons, nuclear envelope integrity. Participates in the cellular trafficking and may regulate the subcellular location of multipass membrane proteins such as the dopamine transporter SLC6A3, leading to the modulation of dopamine neurotransmission. In the endoplasmic reticulum, plays a role in the quality control of protein folding by increasing clearance of misfolded proteins such as SGCE variants or holding them in an intermediate state for proper refolding. May have a redundant function with TOR1B in non-neural tissues. The protein is Torsin-1A (Tor1a) of Mus musculus (Mouse).